Reading from the N-terminus, the 577-residue chain is Arginine--tRNA ligase (577 aa).

Positions 122-132 (PNVAKEMHVGH) match the 'HIGH' region motif.

It belongs to the class-I aminoacyl-tRNA synthetase family. In terms of assembly, monomer.

Its subcellular location is the cytoplasm. The catalysed reaction is tRNA(Arg) + L-arginine + ATP = L-arginyl-tRNA(Arg) + AMP + diphosphate. This Salmonella arizonae (strain ATCC BAA-731 / CDC346-86 / RSK2980) protein is Arginine--tRNA ligase.